The following is a 724-amino-acid chain: MVLTLLLSAYKLCRFFAMSGPRPGAERLAVPGPDGGGGTGPWWAAGGRGPREVSPGAGTEVQDALERALPELQQALSALKQAGGARAVGAGLAEVFQLVEEAWLLPAVGREVAQGLCDAIRLDGGLDLLLRLLQAPELETRVQAARLLEQILVAENRDRVARIGLGVILNLAKEREPVELARSVAGILEHMFKHSEETCQRLVAAGGLDAVLYWCRRTDPALLRHCALALGNCALHGGQAVQRRMVEKRAAEWLFPLAFSKEDELLRLHACLAVAVLATNKEVEREVERSGTLALVEPLVASLDPGRFARCLVDASDTSQGRGPDDLQRLVPLLDSNRLEAQCIGAFYLCAEAAIKSLQGKTKVFSDIGAIQSLKRLVSYSTNGTKSALAKRALRLLGEEVPRPILPSVPSWKEAEVQTWLQQIGFSKYCESFREQQVDGDLLLRLTEEELQTDLGMKSGITRKRFFRELTELKTFANYSTCDRSNLADWLGSLDPRFRQYTYGLVSCGLDRSLLHRVSEQQLLEDCGIHLGVHRARILTAAREMLHSPLPCTGGKPSGDTPDVFISYRRNSGSQLASLLKVHLQLHGFSVFIDVEKLEAGKFEDKLIQSVMGARNFVLVLSPGALDKCMQDHDCKDWVHKEIVTALSCGKNIVPIIDGFEWPEPQVLPEDMQAVLTFNGIKWSHEYQEATIEKIIRFLQGRSSRDSSAGSDTSLEGAAPMGPT.

Residues 1-27 (MVLTLLLSAYKLCRFFAMSGPRPGAER) constitute a mitochondrion transit peptide. The stretch at 60–100 (EVQDALERALPELQQALSALKQAGGARAVGAGLAEVFQLVE) is one ARM 1 repeat. Residues W103, R110, 149 to 157 (EQILVAENR), and 190 to 193 (HMFK) contribute to the NAD(+) site. 7 ARM repeats span residues 114–153 (QGLCDAIRLDGGLDLLLRLLQAPELETRVQAARLLEQILV), 155–193 (ENRDRVARIGLGVILNLAKEREPVELARSVAGILEHMFK), 196–235 (EETCQRLVAAGGLDAVLYWCRRTDPALLRHCALALGNCAL), 237–280 (GGQA…LATN), 281–314 (KEVEREVERSGTLALVEPLVASLDPGRFARCLVD), 315–354 (ASDTSQGRGPDDLQRLVPLLDSNRLEAQCIGAFYLCAEAA), and 359–402 (QGKT…EEVP). SAM domains follow at residues 412–476 (WKEA…LKTF) and 486–548 (NLAD…MLHS). Phosphoserine is present on residues S548 and S558. Residues 560 to 703 (DTPDVFISYR…KIIRFLQGRS (144 aa)) form the TIR domain. NAD(+) is bound by residues 569–570 (RR) and E599. E642 is a catalytic residue. Residues 704–724 (SRDSSAGSDTSLEGAAPMGPT) are disordered.

Belongs to the SARM1 family. As to quaternary structure, homooctamer; forms an octameric ring via SAM domains. Interacts with TICAM1/TRIF and thereby interferes with TICAM1/TRIF function. Interacts with MAPK10/JNK3 and SDC2 (via cytoplasmic domain). Post-translationally, phosphorylation at Ser-548 by JNK kinases (MAPK8, MAPK9 and /or MAPK10) enhance the NAD(+) hydrolase (NADase) activity. Phosphorylation at Ser-548 and subsequent activation takes place in response to oxidative stress conditions and inhibits mitochondrial respiration. As to expression, predominantly expressed in brain, kidney and liver. Expressed at lower level in placenta.

Its subcellular location is the cytoplasm. It localises to the cell projection. It is found in the axon. The protein localises to the dendrite. The protein resides in the synapse. Its subcellular location is the mitochondrion. It carries out the reaction NAD(+) + H2O = ADP-D-ribose + nicotinamide + H(+). It catalyses the reaction NAD(+) = cyclic ADP-beta-D-ribose + nicotinamide + H(+). The enzyme catalyses NADP(+) + H2O = ADP-D-ribose 2'-phosphate + nicotinamide + H(+). With respect to regulation, autoinhibited: in the inactive state, the enzymatic TIR domain is held apart by the autoinhibiting ARM repeats. NAD(+)-binding to ARM repeats maintains an inactive state by promoting interaction between ARM repeats and the TIR domain, thereby facilitating inhibition of the enzymatic TIR domain. Following activation, possibly by nicotinamide mononucleotide (NMN), auto-inhibitory interactions are released, allowing self-association of the TIR domains and subsequent activation of the NAD(+) hydrolase (NADase) activity. Self-association of TIR domains is facilitated by the octamer of SAM domains. NAD(+) hydrolase activity is inhibited by nicotinamide. Specifically inhibited by berberine chloride and zinc chloride. Its function is as follows. NAD(+) hydrolase, which plays a key role in axonal degeneration following injury by regulating NAD(+) metabolism. Acts as a negative regulator of MYD88- and TRIF-dependent toll-like receptor signaling pathway by promoting Wallerian degeneration, an injury-induced form of programmed subcellular death which involves degeneration of an axon distal to the injury site. Wallerian degeneration is triggered by NAD(+) depletion: in response to injury, SARM1 is activated and catalyzes cleavage of NAD(+) into ADP-D-ribose (ADPR), cyclic ADPR (cADPR) and nicotinamide; NAD(+) cleavage promoting cytoskeletal degradation and axon destruction. Also able to hydrolyze NADP(+), but not other NAD(+)-related molecules. Can activate neuronal cell death in response to stress. Regulates dendritic arborization through the MAPK4-JNK pathway. Involved in innate immune response: inhibits both TICAM1/TRIF- and MYD88-dependent activation of JUN/AP-1, TRIF-dependent activation of NF-kappa-B and IRF3, and the phosphorylation of MAPK14/p38. This Homo sapiens (Human) protein is NAD(+) hydrolase SARM1.